A 272-amino-acid polypeptide reads, in one-letter code: Hydroxyethylthiazole kinase (272 aa).

Residue methionine 44 coordinates substrate. Positions 119 and 172 each coordinate ATP. Glycine 199 provides a ligand contact to substrate.

It belongs to the Thz kinase family. The cofactor is Mg(2+).

The enzyme catalyses 5-(2-hydroxyethyl)-4-methylthiazole + ATP = 4-methyl-5-(2-phosphooxyethyl)-thiazole + ADP + H(+). The protein operates within cofactor biosynthesis; thiamine diphosphate biosynthesis; 4-methyl-5-(2-phosphoethyl)-thiazole from 5-(2-hydroxyethyl)-4-methylthiazole: step 1/1. Its function is as follows. Catalyzes the phosphorylation of the hydroxyl group of 4-methyl-5-beta-hydroxyethylthiazole (THZ). The chain is Hydroxyethylthiazole kinase from Enterococcus faecalis (strain ATCC 700802 / V583).